A 470-amino-acid polypeptide reads, in one-letter code: Cupincin (470 aa).

A signal peptide spans 1–34; sequence MAKKKTSSSMARSQLAALLISLCFLSLASNAVGW. Residues 36–52 are compositionally biased toward basic and acidic residues; that stretch reads RRGEREEEDERRRHGGE. Disordered stretches follow at residues 36–59 and 240–261; these read RRGE…PYHL and KSCS…PSSL. Cupin type-1 domains lie at 57–215 and 259–445; these read YHLG…EELE and SSLT…AREA. The N-linked (GlcNAc...) asparagine glycan is linked to N297. A disordered region spans residues 330-368; that stretch reads PHVSGGGSSERREREREHGRRREEEQGEEEHGERGEKAR. Residues 338–367 are compositionally biased toward basic and acidic residues; it reads SERREREREHGRRREEEQGEEEHGERGEKA. H347, E352, and H360 together coordinate Zn(2+).

This sequence belongs to the 7S seed storage protein family. Homotrimer. Requires Zn(2+) as cofactor.

The protein resides in the secreted. Seed storage protein. Globulin-like protein that acts as a zinc metalloprotease. Cleaves specifically between Leu-15 and Tyr-16 of insulin B chain, and Gln-1 and Leu-2 of neurotensin (NT) peptide in vitro. May play a role as an initiating endopeptidase in germinating seeds. The chain is Cupincin from Oryza sativa subsp. japonica (Rice).